A 444-amino-acid polypeptide reads, in one-letter code: Ribosomal protein uS12 methylthiotransferase RimO (444 aa).

The MTTase N-terminal domain maps to 1–117 (MKVGIISLGC…ITEVISSALK (117 aa)). Positions 10, 46, 80, 154, 158, and 161 each coordinate [4Fe-4S] cluster. A Radical SAM core domain is found at 140-370 (YQPGPSAYIK…WEVQKEITRK (231 aa)). Residues 373–441 (EGLVGTEMRV…DYDLIGEMTN (69 aa)) form the TRAM domain.

The protein belongs to the methylthiotransferase family. RimO subfamily. The cofactor is [4Fe-4S] cluster.

The protein resides in the cytoplasm. It catalyses the reaction L-aspartate(89)-[ribosomal protein uS12]-hydrogen + (sulfur carrier)-SH + AH2 + 2 S-adenosyl-L-methionine = 3-methylsulfanyl-L-aspartate(89)-[ribosomal protein uS12]-hydrogen + (sulfur carrier)-H + 5'-deoxyadenosine + L-methionine + A + S-adenosyl-L-homocysteine + 2 H(+). Its function is as follows. Catalyzes the methylthiolation of an aspartic acid residue of ribosomal protein uS12. In Natranaerobius thermophilus (strain ATCC BAA-1301 / DSM 18059 / JW/NM-WN-LF), this protein is Ribosomal protein uS12 methylthiotransferase RimO.